The following is a 342-amino-acid chain: Uroporphyrinogen decarboxylase (342 aa).

Substrate contacts are provided by residues 21–25, D71, Y148, S203, and H316; that span reads RQAGR.

The protein belongs to the uroporphyrinogen decarboxylase family. In terms of assembly, homodimer.

It localises to the cytoplasm. It carries out the reaction uroporphyrinogen III + 4 H(+) = coproporphyrinogen III + 4 CO2. It functions in the pathway porphyrin-containing compound metabolism; protoporphyrin-IX biosynthesis; coproporphyrinogen-III from 5-aminolevulinate: step 4/4. Functionally, catalyzes the decarboxylation of four acetate groups of uroporphyrinogen-III to yield coproporphyrinogen-III. In Campylobacter curvus (strain 525.92), this protein is Uroporphyrinogen decarboxylase.